We begin with the raw amino-acid sequence, 464 residues long: ATP synthase subunit beta (464 aa).

150-157 (GGAGVGKT) contacts ATP.

The protein belongs to the ATPase alpha/beta chains family. As to quaternary structure, F-type ATPases have 2 components, CF(1) - the catalytic core - and CF(0) - the membrane proton channel. CF(1) has five subunits: alpha(3), beta(3), gamma(1), delta(1), epsilon(1). CF(0) has three main subunits: a(1), b(2) and c(9-12). The alpha and beta chains form an alternating ring which encloses part of the gamma chain. CF(1) is attached to CF(0) by a central stalk formed by the gamma and epsilon chains, while a peripheral stalk is formed by the delta and b chains.

The protein localises to the cell membrane. The enzyme catalyses ATP + H2O + 4 H(+)(in) = ADP + phosphate + 5 H(+)(out). Its function is as follows. Produces ATP from ADP in the presence of a proton gradient across the membrane. The catalytic sites are hosted primarily by the beta subunits. The protein is ATP synthase subunit beta of Dehalococcoides mccartyi (strain ATCC BAA-2266 / KCTC 15142 / 195) (Dehalococcoides ethenogenes (strain 195)).